The following is a 619-amino-acid chain: Chaperone protein HscA homolog (619 aa).

Belongs to the heat shock protein 70 family.

Its function is as follows. Chaperone involved in the maturation of iron-sulfur cluster-containing proteins. Has a low intrinsic ATPase activity which is markedly stimulated by HscB. The chain is Chaperone protein HscA homolog from Haemophilus influenzae (strain PittEE).